The following is a 210-amino-acid chain: Thymidylate kinase (210 aa).

Residue 10–17 (GLEGAGKS) participates in ATP binding.

The protein belongs to the thymidylate kinase family.

It catalyses the reaction dTMP + ATP = dTDP + ADP. In terms of biological role, phosphorylation of dTMP to form dTDP in both de novo and salvage pathways of dTTP synthesis. This chain is Thymidylate kinase, found in Haemophilus influenzae (strain PittEE).